We begin with the raw amino-acid sequence, 577 residues long: Proline--tRNA ligase (577 aa).

The protein belongs to the class-II aminoacyl-tRNA synthetase family. ProS type 1 subfamily. Homodimer.

It localises to the cytoplasm. The catalysed reaction is tRNA(Pro) + L-proline + ATP = L-prolyl-tRNA(Pro) + AMP + diphosphate. Catalyzes the attachment of proline to tRNA(Pro) in a two-step reaction: proline is first activated by ATP to form Pro-AMP and then transferred to the acceptor end of tRNA(Pro). As ProRS can inadvertently accommodate and process non-cognate amino acids such as alanine and cysteine, to avoid such errors it has two additional distinct editing activities against alanine. One activity is designated as 'pretransfer' editing and involves the tRNA(Pro)-independent hydrolysis of activated Ala-AMP. The other activity is designated 'posttransfer' editing and involves deacylation of mischarged Ala-tRNA(Pro). The misacylated Cys-tRNA(Pro) is not edited by ProRS. The chain is Proline--tRNA ligase from Helicobacter pylori (strain ATCC 700392 / 26695) (Campylobacter pylori).